The following is a 280-amino-acid chain: Probable formate transporter (280 aa).

Helical transmembrane passes span 33–49 (LSFV…LLAE), 67–83 (LVFG…VVIA), 116–133 (SWVF…VLAY), 177–195 (FWRA…YLAV), 204–219 (SFGI…CIGF), and 253–272 (LGNI…FTYL).

The protein belongs to the FNT transporter (TC 1.A.16) family.

It is found in the cell membrane. May act as a formate transporter. The sequence is that of Probable formate transporter (fdhC) from Methanobacterium formicicum.